The chain runs to 305 residues: Aspartate carbamoyltransferase catalytic subunit (305 aa).

The carbamoyl phosphate site is built by Arg-51 and Thr-52. Lys-79 contributes to the L-aspartate binding site. The carbamoyl phosphate site is built by Arg-101, His-129, and Gln-132. Residues Arg-165 and Arg-220 each contribute to the L-aspartate site. Carbamoyl phosphate contacts are provided by Gly-258 and Pro-259.

This sequence belongs to the aspartate/ornithine carbamoyltransferase superfamily. ATCase family. As to quaternary structure, heterododecamer (2C3:3R2) of six catalytic PyrB chains organized as two trimers (C3), and six regulatory PyrI chains organized as three dimers (R2).

The catalysed reaction is carbamoyl phosphate + L-aspartate = N-carbamoyl-L-aspartate + phosphate + H(+). It functions in the pathway pyrimidine metabolism; UMP biosynthesis via de novo pathway; (S)-dihydroorotate from bicarbonate: step 2/3. In terms of biological role, catalyzes the condensation of carbamoyl phosphate and aspartate to form carbamoyl aspartate and inorganic phosphate, the committed step in the de novo pyrimidine nucleotide biosynthesis pathway. This is Aspartate carbamoyltransferase catalytic subunit from Rubrobacter xylanophilus (strain DSM 9941 / JCM 11954 / NBRC 16129 / PRD-1).